Reading from the N-terminus, the 436-residue chain is Methylenetetrahydrofolate--tRNA-(uracil-5-)-methyltransferase TrmFO (436 aa).

8–13 (GGGLAG) serves as a coordination point for FAD.

It belongs to the MnmG family. TrmFO subfamily. The cofactor is FAD.

It localises to the cytoplasm. It catalyses the reaction uridine(54) in tRNA + (6R)-5,10-methylene-5,6,7,8-tetrahydrofolate + NADH + H(+) = 5-methyluridine(54) in tRNA + (6S)-5,6,7,8-tetrahydrofolate + NAD(+). The catalysed reaction is uridine(54) in tRNA + (6R)-5,10-methylene-5,6,7,8-tetrahydrofolate + NADPH + H(+) = 5-methyluridine(54) in tRNA + (6S)-5,6,7,8-tetrahydrofolate + NADP(+). Catalyzes the folate-dependent formation of 5-methyl-uridine at position 54 (M-5-U54) in all tRNAs. The chain is Methylenetetrahydrofolate--tRNA-(uracil-5-)-methyltransferase TrmFO from Syntrophomonas wolfei subsp. wolfei (strain DSM 2245B / Goettingen).